The chain runs to 584 residues: Protein FAM117B (584 aa).

A disordered region spans residues 1–214 (MSQRVRRNGS…SSSSSIIRRT (214 aa)). Serine 10 is modified (phosphoserine). Positions 53–79 (TRGGGGGGNNGGNGGASGPSGGGGSGG) are enriched in gly residues. Over residues 80 to 90 (PRTASRSTSPT) the composition is skewed to low complexity. Serine 102 is subject to Phosphoserine. Over residues 114–132 (TSTRGTSPTRGTAPGARSS) the composition is skewed to low complexity. Positions 133-142 (PPRPQPPPPL) are enriched in pro residues. Positions 145–154 (TVSSPSSSPT) are enriched in polar residues. Residues 204 to 214 (SSSSSSIIRRT) show a composition bias toward low complexity. Serine 206, serine 215, serine 216, and serine 268 each carry phosphoserine. 2 disordered regions span residues 227–461 (GHWP…SYMF) and 551–584 (STNT…EAEG). The span at 287-297 (RSKHSSRHHRD) shows a compositional bias: basic residues. Serine 340 carries the post-translational modification Phosphoserine. Residues 350-361 (IIIKETGEKEEQ) show a composition bias toward basic and acidic residues. The span at 379 to 392 (QRSSSTRSIDTQTP) shows a compositional bias: polar residues. The residue at position 386 (serine 386) is a Phosphoserine. The segment covering 399–412 (SNNSSRSQSVSPTS) has biased composition (low complexity). Phosphoserine is present on residues serine 444 and serine 452.

The protein is Protein FAM117B (Fam117b) of Mus musculus (Mouse).